Consider the following 134-residue polypeptide: MKKSAVLNEHISKAIATIGHFDLLTINDAGMPIPNDHRRIDLAVTKNLPRFIDVLATVLEEMEIQKIYLAEEIKEHNPTQLQQIKQLISSEIEIIFIPHEEMKSNLAHPLNKGNIRTGETTPYSNIALESNVTF.

Histidine 20 (proton donor) is an active-site residue. Substrate contacts are provided by residues aspartate 28, histidine 99, and 123–125; that span reads YSN.

Belongs to the RbsD / FucU family. RbsD subfamily. Homodecamer.

It is found in the cytoplasm. It carries out the reaction beta-D-ribopyranose = beta-D-ribofuranose. Its pathway is carbohydrate metabolism; D-ribose degradation; D-ribose 5-phosphate from beta-D-ribopyranose: step 1/2. In terms of biological role, catalyzes the interconversion of beta-pyran and beta-furan forms of D-ribose. The polypeptide is D-ribose pyranase (Staphylococcus aureus (strain Mu3 / ATCC 700698)).